A 1132-amino-acid polypeptide reads, in one-letter code: Telomerase reverse transcriptase (1132 aa).

Residues 1–230 (MPRAPRCRAV…ARRRGGSASR (230 aa)) are RNA-interacting domain 1. Residues 58 to 197 (VPWDARPPPA…PHASGPRRRL (140 aa)) are GQ motif. The segment at 137-141 (WGLLL) is required for regulating specificity for telomeric DNA and for processivity for primer elongation. The disordered stretch occupies residues 210-320 (AGVPLGLPAP…SRPPRPWDTP (111 aa)). The segment covering 213–234 (PLGLPAPGARRRGGSASRSLPL) has biased composition (low complexity). The short motif at 222 to 240 (RRRGGSASRSLPLPKRPRR) is the Bipartite nuclear localization signal element. Phosphoserine; by PKB/AKT1 is present on Ser227. The linker stretch occupies residues 231 to 324 (SLPLPKRPRR…RPWDTPCPPV (94 aa)). Basic residues predominate over residues 293 to 304 (RHSHPSVGRQHH). A required for oligomerization region spans residues 301–538 (RQHHAGPPST…VPAAEHRLRE (238 aa)). A compositionally biased stretch (pro residues) spans 310–320 (TSRPPRPWDTP). Residues 325-550 (YAETKHFLYS…LAKFLHWLMS (226 aa)) are RNA-interacting domain 2. The short motif at 328–333 (TKHFLY) is the TFLY; involved in RNA binding element. A QFP motif region spans residues 376 to 521 (PRRLPRLPQR…MSVRDCAWLR (146 aa)). A CP motif region spans residues 397 to 417 (LGNHAQCPYGVLLKTHCPLRA). Ser457 bears the Phosphoserine; by DYRK2 mark. The Reverse transcriptase domain maps to 605-935 (EVRQHREARP…GLFPWCGLLL (331 aa)). A Phosphotyrosine; by SRC-type Tyr-kinases modification is found at Tyr707. The Mg(2+) site is built by Asp712, Asp868, and Asp869. Residues 914–928 (LGGTAFVQMPAHGLF) form a required for oligomerization region. The tract at residues 930-934 (WCGLL) is primer grip sequence. Residues 936–1132 (DTRTLEVQSD…LPSDFKTILD (197 aa)) are CTE.

The protein belongs to the reverse transcriptase family. Telomerase subfamily. In terms of assembly, catalytic component of the telomerase holoenzyme complex composed of one molecule of TERT, one molecule of WRAP53/TCAB1, two molecules of H/ACA ribonucleoprotein complex subunits DKC1, NOP10, NHP2 and GAR1, and a telomerase RNA template component (TERC). The telomerase holoenzyme complex is associated with TEP1, SMG6/EST1A and POT1. The molecular chaperone HSP90/P23 complex is required for correct assembly and stabilization of the active telomerase. Interacts directly with HSP90A and PTGES3. Interacts with HSPA1A; the interaction occurs in the absence of TERC and dissociates once the complex has formed. Interacts with RAN; the interaction promotes nuclear export of TERT. Interacts with XPO1. Interacts with PTPN11; the interaction retains TERT in the nucleus. Interacts with NCL (via RRM1 and C-terminal RRM4/Arg/Gly-rich domains); the interaction is important for nucleolar localization of TERT. Interacts with SMARCA4 (via the bromodomain); the interaction regulates Wnt-mediated signaling. Interacts with MCRS1 (isoform MCRS2); the interaction inhibits in vitro telomerase activity. Interacts with PIF1; the interaction has no effect on the elongation activity of TERT. Interacts with PML; the interaction recruits TERT to PML bodies and inhibits telomerase activity. Interacts with GNL3L. Interacts with isoform 1 and isoform 2 of NVL. Interacts with DHX36. Interacts with ATF7. Post-translationally, phosphorylation at Tyr-707 under oxidative stress leads to translocation of TERT to the cytoplasm and reduces its antiapoptotic activity. Dephosphorylated by SHP2/PTPN11 leading to nuclear retention. Phosphorylation at Ser-227 by the AKT pathway promotes nuclear location. Phosphorylation at the G2/M phase at Ser-457 by DYRK2 promotes ubiquitination by the EDVP complex and degradation. Ubiquitinated by the EDVP complex, a E3 ligase complex following phosphorylation at Ser-457 by DYRK2. Ubiquitinated leads to proteasomal degradation. In terms of processing, (Microbial infection) In case of infection by HIV-1, the EDVP complex is hijacked by HIV-1 via interaction between HIV-1 Vpr and DCAF1/VPRBP, leading to ubiquitination and degradation. Expressed at a high level in thymocyte subpopulations, at an intermediate level in tonsil T-lymphocytes, and at a low to undetectable level in peripheral blood T-lymphocytes.

The protein localises to the nucleus. It localises to the nucleolus. The protein resides in the nucleoplasm. Its subcellular location is the chromosome. It is found in the telomere. The protein localises to the cytoplasm. It localises to the PML body. The catalysed reaction is DNA(n) + a 2'-deoxyribonucleoside 5'-triphosphate = DNA(n+1) + diphosphate. Telomerase is a ribonucleoprotein enzyme essential for the replication of chromosome termini in most eukaryotes. Active in progenitor and cancer cells. Inactive, or very low activity, in normal somatic cells. Catalytic component of the teleromerase holoenzyme complex whose main activity is the elongation of telomeres by acting as a reverse transcriptase that adds simple sequence repeats to chromosome ends by copying a template sequence within the RNA component of the enzyme. Catalyzes the RNA-dependent extension of 3'-chromosomal termini with the 6-nucleotide telomeric repeat unit, 5'-TTAGGG-3'. The catalytic cycle involves primer binding, primer extension and release of product once the template boundary has been reached or nascent product translocation followed by further extension. More active on substrates containing 2 or 3 telomeric repeats. Telomerase activity is regulated by a number of factors including telomerase complex-associated proteins, chaperones and polypeptide modifiers. Modulates Wnt signaling. Plays important roles in aging and antiapoptosis. The polypeptide is Telomerase reverse transcriptase (TERT) (Homo sapiens (Human)).